Here is a 344-residue protein sequence, read N- to C-terminus: Golgi-associated RAB2 interactor protein 1B (344 aa).

It belongs to the GARIN family.

It localises to the golgi apparatus. RAB2B effector protein required for accurate acrosome formation and normal male fertility. In complex with RAB2A/RAB2B, seems to suppress excessive vesicle trafficking during acrosome formation. This is Golgi-associated RAB2 interactor protein 1B (Garin1b) from Rattus norvegicus (Rat).